We begin with the raw amino-acid sequence, 567 residues long: Geraniol synthase, chloroplastic (567 aa).

The N-terminal 63 residues, 1-63, are a transit peptide targeting the chloroplast; the sequence is MSCARITVTL…GDNSQRKNTR (63 aa). A disordered region spans residues 48–75; sequence STPLINGDNSQRKNTRQHMEESSSKRRE. Positions 64–75 are enriched in basic and acidic residues; that stretch reads QHMEESSSKRRE. Residues Arg-286, Asp-323, Asp-327, Arg-466, and Asp-469 each contribute to the (2E)-geranyl diphosphate site. The Mn(2+) site is built by Asp-323 and Asp-327. The DDXXD motif signature appears at 323 to 327; sequence DDIFD. 3 residues coordinate Mn(2+): Asp-469, Thr-473, and Glu-477.

This sequence belongs to the terpene synthase family. Tpsb subfamily. In terms of assembly, homodimer. Mn(2+) serves as cofactor. As to expression, expressed in the peltate glandular trichomes of the leaves.

The protein localises to the plastid. It localises to the chloroplast. It carries out the reaction (2E)-geranyl diphosphate + H2O = (2E)-geraniol + diphosphate. It functions in the pathway secondary metabolite biosynthesis; terpenoid biosynthesis. Monoterpene synthase that catalyzes the formation of geraniol from geranyl diphosphate. This is Geraniol synthase, chloroplastic (GES) from Ocimum basilicum (Sweet basil).